The primary structure comprises 570 residues: Eukaryotic translation initiation factor 2A (570 aa).

WD repeat units lie at residues 274 to 316 and 318 to 358; these read EKKG…FDTI and GPRN…EIIS. Residues 468–526 form a disordered region; it reads PPHLRKPLGGGGSAGPPSAAAPTPGNQNQRPAQPRANGNGNAPQPFRPQQSEQERKAFQ. Residues 482–492 are compositionally biased toward low complexity; it reads GPPSAAAPTPG. Positions 493–518 are enriched in polar residues; it reads NQNQRPAQPRANGNGNAPQPFRPQQS. Residues 519 to 541 are a coiled coil; the sequence is EQERKAFQLKKKVEEIKVLKQRV.

This sequence belongs to the WD repeat EIF2A family.

Functions in the early steps of protein synthesis of a small number of specific mRNAs. Acts by directing the binding of methionyl-tRNAi to 40S ribosomal subunits. In contrast to the eIF-2 complex, it binds methionyl-tRNAi to 40S subunits in a codon-dependent manner, whereas the eIF-2 complex binds methionyl-tRNAi to 40S subunits in a GTP-dependent manner. This is Eukaryotic translation initiation factor 2A from Caenorhabditis elegans.